A 111-amino-acid polypeptide reads, in one-letter code: Nucleoid-associated protein NGK_1136 (111 aa).

It belongs to the YbaB/EbfC family. In terms of assembly, homodimer.

It localises to the cytoplasm. The protein localises to the nucleoid. In terms of biological role, binds to DNA and alters its conformation. May be involved in regulation of gene expression, nucleoid organization and DNA protection. This chain is Nucleoid-associated protein NGK_1136, found in Neisseria gonorrhoeae (strain NCCP11945).